The primary structure comprises 382 residues: Homoserine O-succinyltransferase (382 aa).

In terms of domain architecture, AB hydrolase-1 spans 51–359 (NAVLICHALS…DAPWGHDAFL (309 aa)). Catalysis depends on serine 157, which acts as the Nucleophile. Position 227 (arginine 227) interacts with substrate. Catalysis depends on residues aspartate 322 and histidine 355. Aspartate 356 lines the substrate pocket.

It belongs to the AB hydrolase superfamily. MetX family. In terms of assembly, homodimer.

Its subcellular location is the cytoplasm. It carries out the reaction L-homoserine + succinyl-CoA = O-succinyl-L-homoserine + CoA. The protein operates within amino-acid biosynthesis; L-methionine biosynthesis via de novo pathway; O-succinyl-L-homoserine from L-homoserine: step 1/1. In terms of biological role, transfers a succinyl group from succinyl-CoA to L-homoserine, forming succinyl-L-homoserine. This is Homoserine O-succinyltransferase from Marinobacter nauticus (strain ATCC 700491 / DSM 11845 / VT8) (Marinobacter aquaeolei).